Consider the following 545-residue polypeptide: Chaperonin GroEL (545 aa).

ATP is bound by residues 29–32, K50, 86–90, G415, and D495; these read TLGP and DGTTT.

This sequence belongs to the chaperonin (HSP60) family. As to quaternary structure, forms a cylinder of 14 subunits composed of two heptameric rings stacked back-to-back. Interacts with the co-chaperonin GroES.

It is found in the cytoplasm. It catalyses the reaction ATP + H2O + a folded polypeptide = ADP + phosphate + an unfolded polypeptide.. In terms of biological role, together with its co-chaperonin GroES, plays an essential role in assisting protein folding. The GroEL-GroES system forms a nano-cage that allows encapsulation of the non-native substrate proteins and provides a physical environment optimized to promote and accelerate protein folding. The sequence is that of Chaperonin GroEL from Porphyromonas gingivalis (strain ATCC BAA-308 / W83).